A 257-amino-acid chain; its full sequence is Homeobox protein goosecoid (257 aa).

A DNA-binding region (homeobox) is located at residues 160–219; the sequence is KRRHRTIFTDEQLEALENLFQETKYPDVGTREQLARKVHLREEKVEVWFKNRRAKWRRQK. Residues 213–257 are disordered; that stretch reads AKWRRQKRSSSEESENAEKWNKTSSSKASPEKREEEGKSDLDSDS. Residues 241–257 are compositionally biased toward basic and acidic residues; it reads SPEKREEEGKSDLDSDS.

This sequence belongs to the paired homeobox family. Bicoid subfamily.

It is found in the nucleus. Regulates chordin (CHRD). May play a role in spatial programing within discrete embryonic fields or lineage compartments during organogenesis. In concert with NKX3-2, plays a role in defining the structural components of the middle ear; required for the development of the entire tympanic ring. Probably involved in the regulatory networks that define neural crest cell fate specification and determine mesoderm cell lineages in mammals. The chain is Homeobox protein goosecoid (GSC) from Saguinus labiatus (Red-chested mustached tamarin).